Here is a 296-residue protein sequence, read N- to C-terminus: Protein TIC 21, chloroplastic (296 aa).

Residues 1-90 constitute a chloroplast transit peptide; sequence MQSLLLPPAS…VAFSYPTSPS (90 aa). 4 consecutive transmembrane segments (helical) span residues 125–145, 156–176, 208–228, and 250–270; these read FWGQLVSTVVAAVILSFSIVV, YATASGIAAAFVSVFWSFGYI, VNILGMGSALLGMQATVGFLV, and VLALDVFLVQASANTLLSHFL.

As to quaternary structure, homomultimer. Part of the translocon complex. As to expression, ubiquitous. Highest expression in green tissues and very low levels in mature pollen.

The protein resides in the plastid. It is found in the chloroplast inner membrane. In terms of biological role, involved in chloroplast protein import across the inner envelope membrane. Also acts as a chloroplast permease regulating the iron transport and homeostasis. Involved in the uptake and sequestration of iron in plastids. The chain is Protein TIC 21, chloroplastic (TIC21) from Arabidopsis thaliana (Mouse-ear cress).